A 346-amino-acid chain; its full sequence is Elongation factor Ts (346 aa).

An involved in Mg(2+) ion dislocation from EF-Tu region spans residues 80–83 (TDFV).

The protein belongs to the EF-Ts family.

The protein resides in the cytoplasm. Its function is as follows. Associates with the EF-Tu.GDP complex and induces the exchange of GDP to GTP. It remains bound to the aminoacyl-tRNA.EF-Tu.GTP complex up to the GTP hydrolysis stage on the ribosome. The protein is Elongation factor Ts of Streptococcus suis (strain 98HAH33).